The primary structure comprises 484 residues: tRNA sulfurtransferase (484 aa).

The region spanning 63–167 (ERLVEALKCI…NKDLFIVTQR (105 aa)) is the THUMP domain. Residues 185-186 (LM), lysine 267, glycine 289, and glutamine 298 contribute to the ATP site. A disulfide bond links cysteine 346 and cysteine 458. Residues 406 to 484 (IPENAVVVDI…GFKNVKVYRP (79 aa)) enclose the Rhodanese domain. Cysteine 458 (cysteine persulfide intermediate) is an active-site residue.

This sequence belongs to the ThiI family.

The protein resides in the cytoplasm. It catalyses the reaction [ThiI sulfur-carrier protein]-S-sulfanyl-L-cysteine + a uridine in tRNA + 2 reduced [2Fe-2S]-[ferredoxin] + ATP + H(+) = [ThiI sulfur-carrier protein]-L-cysteine + a 4-thiouridine in tRNA + 2 oxidized [2Fe-2S]-[ferredoxin] + AMP + diphosphate. The enzyme catalyses [ThiS sulfur-carrier protein]-C-terminal Gly-Gly-AMP + S-sulfanyl-L-cysteinyl-[cysteine desulfurase] + AH2 = [ThiS sulfur-carrier protein]-C-terminal-Gly-aminoethanethioate + L-cysteinyl-[cysteine desulfurase] + A + AMP + 2 H(+). It participates in cofactor biosynthesis; thiamine diphosphate biosynthesis. In terms of biological role, catalyzes the ATP-dependent transfer of a sulfur to tRNA to produce 4-thiouridine in position 8 of tRNAs, which functions as a near-UV photosensor. Also catalyzes the transfer of sulfur to the sulfur carrier protein ThiS, forming ThiS-thiocarboxylate. This is a step in the synthesis of thiazole, in the thiamine biosynthesis pathway. The sulfur is donated as persulfide by IscS. In Colwellia psychrerythraea (strain 34H / ATCC BAA-681) (Vibrio psychroerythus), this protein is tRNA sulfurtransferase.